A 245-amino-acid chain; its full sequence is Large ribosomal subunit protein uL4 (245 aa).

Residues 1-13 (MSRVATSDPSVTA) are compositionally biased toward polar residues. 3 disordered regions span residues 1-28 (MSRV…EGGS), 56-114 (ARQG…QRTP), and 224-245 (TSTA…EENK). Basic and acidic residues predominate over residues 59–71 (GTHDTKTRGEVRG). Over residues 72–83 (GGRKPYRQKGTG) the composition is skewed to basic residues.

This sequence belongs to the universal ribosomal protein uL4 family. As to quaternary structure, part of the 50S ribosomal subunit.

Its function is as follows. One of the primary rRNA binding proteins, this protein initially binds near the 5'-end of the 23S rRNA. It is important during the early stages of 50S assembly. It makes multiple contacts with different domains of the 23S rRNA in the assembled 50S subunit and ribosome. In terms of biological role, forms part of the polypeptide exit tunnel. This chain is Large ribosomal subunit protein uL4, found in Frankia casuarinae (strain DSM 45818 / CECT 9043 / HFP020203 / CcI3).